A 510-amino-acid polypeptide reads, in one-letter code: DNA nucleotidylexotransferase (510 aa).

The disordered stretch occupies residues 1–22 (MDPLQAVHLGPRKKRPRQLGTP). Residues 11-17 (PRKKRPR) carry the Nuclear localization signal motif. Positions 27–124 (PYDIRFRDLV…KPVEMMGRHQ (98 aa)) constitute a BRCT domain. Serine 134 carries the post-translational modification Phosphoserine. The segment at 151–510 (SQYACQRRTT…DYIEPWERNA (360 aa)) is mediates interaction with DNTTIP2. The interval 258-262 (VGLKT) is involved in DNA binding. A 2'-deoxyribonucleoside 5'-triphosphate is bound by residues 333-338 (GFRRGK) and 342-345 (HDVD). The Mg(2+) site is built by aspartate 343, aspartate 345, and aspartate 434. 449–450 (GW) is an a 2'-deoxyribonucleoside 5'-triphosphate binding site.

This sequence belongs to the DNA polymerase type-X family. Interacts with PRP19 and DNTTIP1. Forms a ternary complex with DNTTIP2 and core histone. Released from this complex by PCNA. Interacts with TRERF1. Mg(2+) serves as cofactor. Isoform TDT-L: Expressed in the thymus, and, at lower levels, in the bone marrow. Detected in both cycling and noncycling pro-B and pre-B cells (at protein level). Isoform TDT-S: Expressed in both cycling and noncycling pro-B, but not pre-B, cells (at protein level). Not detected in mature peripheral or germinal center B cells.

The protein localises to the nucleus. It is found in the cytoplasm. The enzyme catalyses DNA(n) + a 2'-deoxyribonucleoside 5'-triphosphate = DNA(n+1) + diphosphate. Transferase that catalyzes the nontemplated addition of nucleoside triphosphate to coding ends during V(D)J recombination (N addition). Involved in the generation of diversity in the antigen-binding region of immunoglobulin heavy and light chains and T-cell receptors during B- and T-cell development. Does not act on double-stranded DNA with blunt ends. Functionally, 3'-to-5' DNA exonuclease. Involved in the generation of diversity in the antigen-binding region of immunoglobulin heavy and light chains and T-cell receptors during B- and T-cell development. Acts on single-stranded and double-stranded DNA with 3' or 5' extensions, but not on double-stranded DNA with blunt ends. Attenuates not only isoform TDT-S-catalyzed N addition, but also P (palindromic) addition in coding joins. Lacks terminal transferase activity. In Mus musculus (Mouse), this protein is DNA nucleotidylexotransferase (Dntt).